Here is a 525-residue protein sequence, read N- to C-terminus: GMP synthase [glutamine-hydrolyzing] (525 aa).

The region spanning 9–207 (RILILDFGSQ…VRDICECEAL (199 aa)) is the Glutamine amidotransferase type-1 domain. The active-site Nucleophile is the Cys86. Residues His181 and Glu183 contribute to the active site. A GMPS ATP-PPase domain is found at 208-400 (WTPAKIIDDA…LGLPYDMLYR (193 aa)). 235–241 (SGGVDSS) serves as a coordination point for ATP.

As to quaternary structure, homodimer.

It catalyses the reaction XMP + L-glutamine + ATP + H2O = GMP + L-glutamate + AMP + diphosphate + 2 H(+). Its pathway is purine metabolism; GMP biosynthesis; GMP from XMP (L-Gln route): step 1/1. In terms of biological role, catalyzes the synthesis of GMP from XMP. The chain is GMP synthase [glutamine-hydrolyzing] from Cronobacter sakazakii (strain ATCC BAA-894) (Enterobacter sakazakii).